Reading from the N-terminus, the 300-residue chain is Glutamyl-Q tRNA(Asp) synthetase (300 aa).

L-glutamate contacts are provided by residues 14 to 18 and E50; that span reads RFAPT. The 'HIGH' region signature appears at 17–27; that stretch reads PTPSGFLHFGS. Residues C106, C108, Y120, and C124 each coordinate Zn(2+). Y177 and R195 together coordinate L-glutamate. The 'KMSKS' region motif lies at 233 to 237; sequence KLGKS. Position 236 (K236) interacts with ATP.

Belongs to the class-I aminoacyl-tRNA synthetase family. GluQ subfamily. Requires Zn(2+) as cofactor.

Its function is as follows. Catalyzes the tRNA-independent activation of glutamate in presence of ATP and the subsequent transfer of glutamate onto a tRNA(Asp). Glutamate is transferred on the 2-amino-5-(4,5-dihydroxy-2-cyclopenten-1-yl) moiety of the queuosine in the wobble position of the QUC anticodon. The polypeptide is Glutamyl-Q tRNA(Asp) synthetase (Pseudomonas putida (strain ATCC 47054 / DSM 6125 / CFBP 8728 / NCIMB 11950 / KT2440)).